The sequence spans 438 residues: MLLSKYFLPVLKEEPSEAQITSHKLMLRSGMIRQQAAGIYTWLPLGLKILKNIENIVRSNMNKAGALEVLMPCIQPAHLWMESGRFENYGKEMLKFQDRHDNTLLFGPTNEDMITDIFRHNIKSYKDLPKNLYHIQWKFRDEIRPRFGVMRGREFLMKDAYSFDINEENAVKTYNQMFKTYINTFRDLGVFAIPVIADNGPIGGNLSNEFHIIAETGESTLYYDKRFKIFKDNPDIDVEEIKSWYAASEEKHDVNKLPISEQEITSSKGIEVGHIFYIGSKYSVNMNALINDEHGKLTPVEMSSYGIGISRLVAAIIEANCDEKGIIWPSSVAPFKVSLINLNIHDSKCTELAERAYKELSAQNIEVLYDDTDVRPGSKFATHDLIGSPYQIIIGPKKAANNIVEFKNRKSGVIEDIKIGNLKKLIMSCLRQQKSCNF.

Belongs to the class-II aminoacyl-tRNA synthetase family. ProS type 2 subfamily. Homodimer.

It localises to the cytoplasm. The catalysed reaction is tRNA(Pro) + L-proline + ATP = L-prolyl-tRNA(Pro) + AMP + diphosphate. Its function is as follows. Catalyzes the attachment of proline to tRNA(Pro) in a two-step reaction: proline is first activated by ATP to form Pro-AMP and then transferred to the acceptor end of tRNA(Pro). The chain is Proline--tRNA ligase from Rickettsia canadensis (strain McKiel).